The primary structure comprises 214 residues: Phosphoenolpyruvate guanylyltransferase (214 aa).

Phosphoenolpyruvate is bound by residues Thr139, Gly155, and Ser158.

Belongs to the CofC family.

It carries out the reaction phosphoenolpyruvate + GTP + H(+) = enolpyruvoyl-2-diphospho-5'-guanosine + diphosphate. It functions in the pathway cofactor biosynthesis; coenzyme F420 biosynthesis. Guanylyltransferase that catalyzes the activation of phosphoenolpyruvate (PEP) as enolpyruvoyl-2-diphospho-5'-guanosine, via the condensation of PEP with GTP. It is involved in the biosynthesis of coenzyme F420, a hydride carrier cofactor. This chain is Phosphoenolpyruvate guanylyltransferase, found in Salinispora arenicola (strain CNS-205).